A 968-amino-acid polypeptide reads, in one-letter code: RNA polymerase-associated protein RapA (968 aa).

The Helicase ATP-binding domain maps to 164 to 334 (DVGRRHAPRV…FARLRLLDPN (171 aa)). 177 to 184 (DEVGLGKT) provides a ligand contact to ATP. The short motif at 280–283 (DEAH) is the DEAH box element. Residues 490-662 (RVEWLMGYLT…YLASPDQTEG (173 aa)) form the Helicase C-terminal domain.

Belongs to the SNF2/RAD54 helicase family. RapA subfamily. Interacts with the RNAP. Has a higher affinity for the core RNAP than for the holoenzyme. Its ATPase activity is stimulated by binding to RNAP.

In terms of biological role, transcription regulator that activates transcription by stimulating RNA polymerase (RNAP) recycling in case of stress conditions such as supercoiled DNA or high salt concentrations. Probably acts by releasing the RNAP, when it is trapped or immobilized on tightly supercoiled DNA. Does not activate transcription on linear DNA. Probably not involved in DNA repair. This is RNA polymerase-associated protein RapA from Shigella boydii serotype 18 (strain CDC 3083-94 / BS512).